The primary structure comprises 238 residues: Small ribosomal subunit protein uS2 (238 aa).

The protein belongs to the universal ribosomal protein uS2 family.

This is Small ribosomal subunit protein uS2 from Moorella thermoacetica (strain ATCC 39073 / JCM 9320).